Reading from the N-terminus, the 176-residue chain is Disulfide bond formation protein B (176 aa).

The Cytoplasmic portion of the chain corresponds to 1–14; the sequence is MMRSLNRCSKHRAA. A helical transmembrane segment spans residues 15–31; the sequence is WLLLALTTFSLELVALY. Topologically, residues 32-49 are periplasmic; sequence FQHVMLLKPCVLCVYQRC. A disulfide bond links Cys-41 and Cys-44. Residues 50–65 traverse the membrane as a helical segment; the sequence is ALYGVVAAGLVGAIAP. Residues 66 to 71 are Cytoplasmic-facing; that stretch reads ATPLRF. The helical transmembrane segment at 72–89 threads the bilayer; that stretch reads SGLAIWLYSAWEGLQLAM. The Periplasmic segment spans residues 90-144; the sequence is KHTDIQLHPSPFVTCDFFVSFPAWLPLDKWLPSVFSASGDCAVRQWHFLSLEMPQ. Cys-104 and Cys-130 form a disulfide bridge. A helical membrane pass occupies residues 145-163; sequence WMIVIFGAYLAVAVLILLA. Over 164–176 the chain is Cytoplasmic; it reads QFFPPRKRDLFSR.

This sequence belongs to the DsbB family.

The protein localises to the cell inner membrane. Its function is as follows. Required for disulfide bond formation in some periplasmic proteins. Acts by oxidizing the DsbA protein. This Sodalis glossinidius (strain morsitans) protein is Disulfide bond formation protein B.